The sequence spans 161 residues: Nucleotide-binding protein PBPRA2024 (161 aa).

The protein belongs to the YajQ family.

Its function is as follows. Nucleotide-binding protein. This is Nucleotide-binding protein PBPRA2024 from Photobacterium profundum (strain SS9).